A 335-amino-acid polypeptide reads, in one-letter code: DNA-directed RNA polymerase subunit alpha (335 aa).

The alpha N-terminal domain (alpha-NTD) stretch occupies residues 1-248 (MTIQTSRTLS…GLFAPLQEVS (248 aa)). The segment at 256 to 335 (KPDEDNQKNQ…LPRTREKGKA (80 aa)) is alpha C-terminal domain (alpha-CTD).

Belongs to the RNA polymerase alpha chain family. As to quaternary structure, in cyanobacteria the RNAP catalytic core is composed of 2 alpha, 1 beta, 1 beta', 1 gamma and 1 omega subunit. When a sigma factor is associated with the core the holoenzyme is formed, which can initiate transcription.

It carries out the reaction RNA(n) + a ribonucleoside 5'-triphosphate = RNA(n+1) + diphosphate. Its function is as follows. DNA-dependent RNA polymerase catalyzes the transcription of DNA into RNA using the four ribonucleoside triphosphates as substrates. The polypeptide is DNA-directed RNA polymerase subunit alpha (Synechococcus sp. (strain JA-2-3B'a(2-13)) (Cyanobacteria bacterium Yellowstone B-Prime)).